Consider the following 708-residue polypeptide: Matrix metalloproteinase-9 (708 aa).

The first 19 residues, 1-19 (MSPWQPLLLVLLALGYSFA), serve as a signal peptide directing secretion. A propeptide spans 20 to 107 (APHQRQPTYV…PRCGVPDVGK (88 aa)) (activation peptide). N-linked (GlcNAc...) asparagine glycosylation occurs at Asn39. Positions 98–105 (PRCGVPDV) match the Cysteine switch motif. Residue Cys100 coordinates Zn(2+). Asn121 carries an N-linked (GlcNAc...) asparagine glycan. Ca(2+) is bound by residues Asp132 and Asp166. Positions 176 and 178 each coordinate Zn(2+). 4 residues coordinate Ca(2+): Asp183, Gly184, Asp186, and Leu188. His191 provides a ligand contact to Zn(2+). The Ca(2+) site is built by Gly198, Gln200, and Asp202. His204 contacts Zn(2+). Ca(2+) contacts are provided by Asp206, Asp207, and Glu209. 3 consecutive Fibronectin type-II domains span residues 226 to 274 (ANGA…FCPS), 284 to 332 (GDGK…FCPT), and 343 to 391 (SAGE…FCPD). Disulfide bonds link Cys231-Cys257, Cys245-Cys272, Cys289-Cys315, Cys303-Cys330, Cys348-Cys374, and Cys362-Cys389. His402 contacts Zn(2+). Residue Glu403 is part of the active site. The Zn(2+) site is built by His406 and His412. A disordered region spans residues 441-520 (HHLYGRGSKP…SSTPDDNPCN (80 aa)). Residues 480 to 490 (PTGGPTVAPTG) show a composition bias toward low complexity. Pro residues predominate over residues 491–502 (APSPGPTGPPTA). Cys519 and Cys707 are joined by a disulfide. 4 Hemopexin repeats span residues 521–566 (VDVF…WPAF), 567–611 (PSKL…GLGS), 613–660 (VTLV…FSGV), and 661–707 (PWNS…LLQC).

It belongs to the peptidase M10A family. In terms of assembly, exists as monomer or homodimer; disulfide-linked. Also exists as heterodimer with LCN2. Macrophages and transformed cell lines produce only the monomeric form. Interacts with ECM1. The cofactor is Zn(2+). Requires Ca(2+) as cofactor. In terms of processing, N- and O-glycosylated.

The protein localises to the secreted. Its subcellular location is the extracellular space. It localises to the extracellular matrix. The catalysed reaction is Cleavage of gelatin types I and V and collagen types IV and V.. Its function is as follows. Matrix metalloproteinase that plays an essential role in local proteolysis of the extracellular matrix and in leukocyte migration. Could play a role in bone osteoclastic resorption. Cleaves KiSS1 at a Gly-|-Leu bond. Cleaves NINJ1 to generate the Secreted ninjurin-1 form. Cleaves type IV and type V collagen into large C-terminal three quarter fragments and shorter N-terminal one quarter fragments. Degrades fibronectin but not laminin or Pz-peptide. This is Matrix metalloproteinase-9 (Mmp9) from Rattus norvegicus (Rat).